Consider the following 188-residue polypeptide: Antitoxin SocA (188 aa).

In terms of assembly, interacts with cognate toxin SocB and with ClpX.

Its function is as follows. Antitoxin component of an atypical type II toxin-antitoxin (TA) system. Unlike most type II TA systems, neutralizes the toxic activity of cognate toxin SocB by acting as an adapter to promote its degradation by ClpXP; degradation is dependent on the N-terminus of ClpX. In Caulobacter vibrioides (strain NA1000 / CB15N) (Caulobacter crescentus), this protein is Antitoxin SocA.